Here is a 187-residue protein sequence, read N- to C-terminus: GTP cyclohydrolase 1 (187 aa).

The Zn(2+) site is built by C76, H79, and C148.

Belongs to the GTP cyclohydrolase I family. As to quaternary structure, toroid-shaped homodecamer, composed of two pentamers of five dimers.

It catalyses the reaction GTP + H2O = 7,8-dihydroneopterin 3'-triphosphate + formate + H(+). It functions in the pathway cofactor biosynthesis; 7,8-dihydroneopterin triphosphate biosynthesis; 7,8-dihydroneopterin triphosphate from GTP: step 1/1. The polypeptide is GTP cyclohydrolase 1 (Streptococcus suis (strain 98HAH33)).